The following is a 101-amino-acid chain: Putative defensin-like protein 86 (101 aa).

An N-terminal signal peptide occupies residues 1–27 (MAITKMSSLIILSLMMLTFIYIPMISG). Cystine bridges form between Cys35-Cys71, Cys39-Cys59, Cys45-Cys69, and Cys49-Cys70.

Belongs to the DEFL family.

It is found in the secreted. This chain is Putative defensin-like protein 86 (LCR82), found in Arabidopsis thaliana (Mouse-ear cress).